The primary structure comprises 295 residues: Protein LplC (295 aa).

The next 6 helical transmembrane spans lie at 21-41 (ILFL…IIAG), 81-101 (VSIF…FTMA), 116-136 (LNLV…YLVV), 142-162 (LDTY…LIII), 199-219 (VIAT…FHAL), and 260-280 (GIKL…YPFL). The ABC transmembrane type-1 domain occupies 79 to 280 (MGVSIFITVV…LPILAVYPFL (202 aa)).

This sequence belongs to the binding-protein-dependent transport system permease family. CysTW subfamily.

It localises to the cell membrane. The polypeptide is Protein LplC (lplC) (Bacillus subtilis (strain 168)).